We begin with the raw amino-acid sequence, 159 residues long: Endoribonuclease YbeY (159 aa).

3 residues coordinate Zn(2+): histidine 122, histidine 126, and histidine 132.

This sequence belongs to the endoribonuclease YbeY family. It depends on Zn(2+) as a cofactor.

The protein resides in the cytoplasm. In terms of biological role, single strand-specific metallo-endoribonuclease involved in late-stage 70S ribosome quality control and in maturation of the 3' terminus of the 16S rRNA. This chain is Endoribonuclease YbeY, found in Roseiflexus castenholzii (strain DSM 13941 / HLO8).